A 138-amino-acid chain; its full sequence is Histone H2AX (138 aa).

The segment at methionine 1 to serine 23 is disordered. Position 2 is an N-acetylserine (serine 2). N6-acetyllysine is present on residues lysine 6, lysine 9, lysine 11, lysine 13, and lysine 18. The residue at position 123 (serine 123) is a Phosphoserine. Lysine 124 participates in a covalent cross-link: Glycyl lysine isopeptide (Lys-Gly) (interchain with G-Cter in ubiquitin). Phosphoserine occurs at positions 125, 130, and 135. The short motif at serine 135–glutamine 136 is the [ST]-Q motif element.

It belongs to the histone H2A family. The nucleosome is a histone octamer containing two molecules each of H2A, H2B, H3 and H4 assembled in one H3-H4 heterotetramer and two H2A-H2B heterodimers. The octamer wraps approximately 147 bp of DNA. In terms of processing, monoubiquitination of Lys-124 gives a specific tag for epigenetic transcriptional repression. Post-translationally, phosphorylated to form H2AX134ph (gamma-H2AX) in response to DNA double-strand breaks (DSBs) generated by exogenous genotoxic agents in both the mitotic MIC and the amitotic MAC. Gamma-H2AX is also found when programmed DNA rearrangements occur, namely homologous recombination in the MIC during prophase of meiosis, and chromosome fragmentation and DNA elimination in developing MACs. Gamma-H2AX is important to recover from exogenous DNA damage and to repair breaks associated with normal micronuclear meiosis and mitosis and macronuclear amitotic division. Acetylation occurs almost exclusively in the MAC.

The protein localises to the nucleus. Its subcellular location is the chromosome. In terms of biological role, core component of nucleosome which plays a central role in DNA double strand break (DSB) repair. Nucleosomes wrap and compact DNA into chromatin, limiting DNA accessibility to the cellular machineries which require DNA as a template. Histones thereby play a central role in transcription regulation, DNA repair, DNA replication and chromosomal stability. DNA accessibility is regulated via a complex set of post-translational modifications of histones, also called histone code, and nucleosome remodeling. The chain is Histone H2AX (HTA1) from Tetrahymena thermophila (strain SB210).